The chain runs to 789 residues: Ent-kaur-16-ene synthase, chloroplastic (789 aa).

Positions 536, 540, 680, 684, and 688 each coordinate Mg(2+). The DDXXD motif motif lies at 536-540; sequence DDFYD.

It belongs to the terpene synthase family. Mg(2+) is required as a cofactor. Post-translationally, the N-terminus is blocked. Abundant in most tissues. Present in low amounts in mature cotyledons.

It localises to the plastid. The protein resides in the chloroplast. The catalysed reaction is ent-copalyl diphosphate = ent-kaur-16-ene + diphosphate. It functions in the pathway plant hormone biosynthesis; gibberellin biosynthesis. Catalyzes the conversion of ent-copalyl diphosphate to the gibberellin precursor ent-kaur-16-ene. The protein is Ent-kaur-16-ene synthase, chloroplastic of Cucurbita maxima (Pumpkin).